The chain runs to 142 residues: Large ribosomal subunit protein uL13 (142 aa).

It belongs to the universal ribosomal protein uL13 family. As to quaternary structure, part of the 50S ribosomal subunit.

In terms of biological role, this protein is one of the early assembly proteins of the 50S ribosomal subunit, although it is not seen to bind rRNA by itself. It is important during the early stages of 50S assembly. In Pseudomonas paraeruginosa (strain DSM 24068 / PA7) (Pseudomonas aeruginosa (strain PA7)), this protein is Large ribosomal subunit protein uL13.